The primary structure comprises 688 residues: PTS system glucoside-specific EIICBA component (688 aa).

The PTS EIIC type-1 domain maps to 3–427; that stretch reads KKLFGQLQRI…FKLKTPGRED (425 aa). The next 10 membrane-spanning stretches (helical) occupy residues 12 to 32, 81 to 101, 137 to 157, 182 to 202, 223 to 243, 284 to 304, 315 to 335, 340 to 360, 364 to 384, and 395 to 415; these read IGKALMLPVAILPAAGILLAF, LGLAGGDGVAALAALVGYLIM, LVLGIPTLQTGVFGGIIMGAL, FVPIVTSVVAIATGVVLSFAW, LTTFIFGIIERSLIPFGLHHI, AFTTGKYPFMMFGLPAAAFAI, IVGGLMLSAGLTAFLTGITEP, FLFVAPVLYGIHVLLAGTSFL, LLGVKIGMTFSGGFIDYILYG, and LVIPVGIVYAIVYYFLFDFAI. The PTS EIIB type-1 domain maps to 438–519; the sequence is AKLPFDVLDA…AKIMSGEITK (82 aa). The active-site Phosphocysteine intermediate; for EIIB activity is the Cys-460. The region spanning 560 to 664 is the PTS EIIA type-1 domain; that stretch reads DQVFAGKMMG…SIVTPMIITN (105 aa). The active-site Tele-phosphohistidine intermediate; for EIIA activity is the His-612.

The protein resides in the cell membrane. Its function is as follows. The phosphoenolpyruvate-dependent sugar phosphotransferase system (sugar PTS), a major carbohydrate active -transport system, catalyzes the phosphorylation of incoming sugar substrates concomitantly with their translocation across the cell membrane. This system is involved in alpha- and beta-glucoside transport. The polypeptide is PTS system glucoside-specific EIICBA component (glcB) (Staphylococcus aureus (strain MRSA252)).